Consider the following 320-residue polypeptide: Heterogeneous nuclear ribonucleoprotein A1 (320 aa).

At Met1 the chain carries N-acetylmethionine. At Ser2 the chain carries N-acetylserine; in Heterogeneous nuclear ribonucleoprotein A1, N-terminally processed. The residue at position 2 (Ser2) is a Phosphoserine. Lys3 carries the post-translational modification N6-acetyllysine; alternate. Lys3 is covalently cross-linked (Glycyl lysine isopeptide (Lys-Gly) (interchain with G-Cter in SUMO2); alternate). Phosphoserine is present on residues Ser4 and Ser6. A globular A domain region spans residues 4–94 (SESPKEPEQL…EPKRAVSRED (91 aa)). Residue Lys8 forms a Glycyl lysine isopeptide (Lys-Gly) (interchain with G-Cter in SUMO2) linkage. RRM domains are found at residues 14–97 (RKLF…DSQR) and 105–184 (KKIF…LCKQ). Residue Ser22 is modified to Phosphoserine. Residue Lys78 forms a Glycyl lysine isopeptide (Lys-Gly) (interchain with G-Cter in SUMO2) linkage. The globular B domain stretch occupies residues 95–185 (SQRPGAHLTV…EVRKALCKQE (91 aa)). Lys113 is covalently cross-linked (Glycyl lysine isopeptide (Lys-Gly) (interchain with G-Cter in SUMO)). Glycyl lysine isopeptide (Lys-Gly) (interchain with G-Cter in SUMO2) cross-links involve residues Lys179 and Lys183. Residues 188-216 (SASSSQRGRSGSGNFGGGRGGGFGGNDNF) are disordered. Ser192 carries the post-translational modification Phosphoserine; by MKNK2. Arg194 carries the asymmetric dimethylarginine; alternate modification. Arg194 is subject to Dimethylated arginine; alternate. Arg194 is subject to Omega-N-methylarginine; alternate. Residues 197–216 (SGSGNFGGGRGGGFGGNDNF) show a composition bias toward gly residues. At Ser199 the chain carries Phosphoserine. Asymmetric dimethylarginine; alternate occurs at positions 206, 218, 225, and 232. Arg206 carries the post-translational modification Dimethylated arginine; alternate. Omega-N-methylarginine; alternate occurs at positions 206, 218, 225, and 232. The tract at residues 218–240 (RGGNFSGRGGFGGSRGGGGYGGS) is RNA-binding RGG-box. Arg225 bears the Dimethylated arginine; alternate mark. The segment at 268 to 305 (NQSSNFGPMKGGNFGGRSSGPYGGGGQYFAKPRNQGGY) is nuclear targeting sequence. The segment at 271 to 320 (SNFGPMKGGNFGGRSSGPYGGGGQYFAKPRNQGGYGGSSSSSSYGSGRRF) is disordered. The segment covering 276 to 294 (MKGGNFGGRSSGPYGGGGQ) has biased composition (gly residues). Arg284 carries the omega-N-methylarginine modification. The residue at position 285 (Ser285) is a Phosphoserine. Lys298 is subject to N6-acetyllysine; alternate. A Glycyl lysine isopeptide (Lys-Gly) (interchain with G-Cter in SUMO2); alternate cross-link involves residue Lys298. An Omega-N-methylarginine modification is found at Arg300. Over residues 308 to 320 (SSSSSSYGSGRRF) the composition is skewed to low complexity. Ser309 carries the phosphoserine modification. Residues Ser310, Ser311, and Ser312 each carry the phosphoserine; by MKNK2 modification. Phosphoserine is present on residues Ser313 and Ser316. Omega-N-methylarginine is present on Arg318.

As to quaternary structure, identified in the spliceosome C complex. Identified in a IGF2BP1-dependent mRNP granule complex containing untranslated mRNAs. Interacts with SEPT6. Interacts with C9orf72. Interacts with KHDRBS1. Interacts with UBQLN2. Interacts with PPIA/CYPA. In terms of processing, sumoylated.

It localises to the nucleus. It is found in the cytoplasm. Functionally, involved in the packaging of pre-mRNA into hnRNP particles, transport of poly(A) mRNA from the nucleus to the cytoplasm and modulation of splice site selection. Plays a role in the splicing of pyruvate kinase PKM by binding repressively to sequences flanking PKM exon 9, inhibiting exon 9 inclusion and resulting in exon 10 inclusion and production of the PKM M2 isoform. Binds to the IRES and thereby inhibits the translation of the apoptosis protease activating factor APAF1. May bind to specific miRNA hairpins. The protein is Heterogeneous nuclear ribonucleoprotein A1 (Hnrnpa1) of Rattus norvegicus (Rat).